Here is a 306-residue protein sequence, read N- to C-terminus: IN2-2 protein (306 aa).

The active-site Proton donor is the Y64. Residue H131 participates in substrate binding. 210-220 (SPLGRGFFSSG) is an NADP(+) binding site. The interval 272–306 (LGSPPRKRRLPHTWHNKNRQLQPERGGTVCEAYTG) is disordered. Basic residues predominate over residues 276-289 (PRKRRLPHTWHNKN).

Belongs to the aldo/keto reductase family. Aldo/keto reductase 2 subfamily. Leaves and roots.

The protein is IN2-2 protein (IN2-2) of Zea mays (Maize).